The sequence spans 227 residues: Lectin (227 aa).

An N-terminal signal peptide occupies residues 1 to 28; the sequence is MTMTSTTTKAMAMAAAVLAAAAVAATNA. A Pyrrolidone carboxylic acid modification is found at Gln-29. Chitin-binding type-1 domains lie at 29–70, 71–113, 114–156, and 157–199; these read QTCG…ACCS, SQRC…PCRA, DIKC…ACCP, and EKRC…GCYK. 16 disulfide bridges follow: Cys-31–Cys-46, Cys-40–Cys-52, Cys-45–Cys-59, Cys-63–Cys-68, Cys-74–Cys-89, Cys-83–Cys-95, Cys-88–Cys-102, Cys-106–Cys-111, Cys-117–Cys-132, Cys-126–Cys-138, Cys-131–Cys-145, Cys-149–Cys-154, Cys-160–Cys-175, Cys-169–Cys-181, Cys-174–Cys-188, and Cys-192–Cys-197. Residue 38–40 participates in substrate binding; sequence MIC. Residue 90–101 coordinates substrate; it reads SQYGYCGFGSEY. 142–143 is a substrate binding site; sequence SE. Residues 202–227 constitute a propeptide that is removed on maturation; it reads DGMAAILANNQSVSFEGIIESVAELV. Asn-211 carries an N-linked (GlcNAc...) asparagine glycan.

Functionally, N-acetyl-D-glucosamine binding lectin. The protein is Lectin of Oryza sativa subsp. indica (Rice).